A 381-amino-acid chain; its full sequence is Succinyl-diaminopimelate desuccinylase (381 aa).

A Zn(2+)-binding site is contributed by histidine 68. Aspartate 70 is an active-site residue. Position 101 (aspartate 101) interacts with Zn(2+). Glutamate 135 functions as the Proton acceptor in the catalytic mechanism. Zn(2+)-binding residues include glutamate 136, glutamate 164, and histidine 350.

The protein belongs to the peptidase M20A family. DapE subfamily. Homodimer. Requires Zn(2+) as cofactor. Co(2+) serves as cofactor.

The catalysed reaction is N-succinyl-(2S,6S)-2,6-diaminopimelate + H2O = (2S,6S)-2,6-diaminopimelate + succinate. The protein operates within amino-acid biosynthesis; L-lysine biosynthesis via DAP pathway; LL-2,6-diaminopimelate from (S)-tetrahydrodipicolinate (succinylase route): step 3/3. In terms of biological role, catalyzes the hydrolysis of N-succinyl-L,L-diaminopimelic acid (SDAP), forming succinate and LL-2,6-diaminopimelate (DAP), an intermediate involved in the bacterial biosynthesis of lysine and meso-diaminopimelic acid, an essential component of bacterial cell walls. In Neisseria meningitidis serogroup C / serotype 2a (strain ATCC 700532 / DSM 15464 / FAM18), this protein is Succinyl-diaminopimelate desuccinylase.